The primary structure comprises 111 residues: Antirepressor protein CarS (111 aa).

Monomer. Interacts with CarA and CarH.

Involved in carotenoid biosynthesis. Antagonizes the transcriptional repressor proteins CarA and CarH by preventing their binding to DNA. Can also dissociate preformed CarA-DNA complexes. Does not bind DNA. In Myxococcus xanthus, this protein is Antirepressor protein CarS (carS).